The following is a 163-amino-acid chain: HTH-type transcriptional regulator IscR (163 aa).

The region spanning 2–131 is the HTH rrf2-type domain; the sequence is RLTSKGRYAV…NNITLGELVN (130 aa). The segment at residues 28–51 is a DNA-binding region (H-T-H motif); that stretch reads LADISERQGISLSYLEQLFSRLRK. Residues C92, C98, and C104 each contribute to the [2Fe-2S] cluster site.

[2Fe-2S] cluster is required as a cofactor.

Regulates the transcription of several operons and genes involved in the biogenesis of Fe-S clusters and Fe-S-containing proteins. This is HTH-type transcriptional regulator IscR from Enterobacter sp. (strain 638).